The primary structure comprises 220 residues: Deoxyribose-phosphate aldolase (220 aa).

Residue D92 is the Proton donor/acceptor of the active site. The active-site Schiff-base intermediate with acetaldehyde is the K157. K186 serves as the catalytic Proton donor/acceptor.

This sequence belongs to the DeoC/FbaB aldolase family. DeoC type 1 subfamily.

It localises to the cytoplasm. The catalysed reaction is 2-deoxy-D-ribose 5-phosphate = D-glyceraldehyde 3-phosphate + acetaldehyde. The protein operates within carbohydrate degradation; 2-deoxy-D-ribose 1-phosphate degradation; D-glyceraldehyde 3-phosphate and acetaldehyde from 2-deoxy-alpha-D-ribose 1-phosphate: step 2/2. In terms of biological role, catalyzes a reversible aldol reaction between acetaldehyde and D-glyceraldehyde 3-phosphate to generate 2-deoxy-D-ribose 5-phosphate. The chain is Deoxyribose-phosphate aldolase from Caldicellulosiruptor saccharolyticus (strain ATCC 43494 / DSM 8903 / Tp8T 6331).